The primary structure comprises 305 residues: Tyrosine recombinase XerC (305 aa).

One can recognise a Core-binding (CB) domain in the interval 4 to 95 (ISIQELIKQW…TVKNFYKFLE (92 aa)). The 183-residue stretch at 116 to 298 (LLPKALSVDD…SIKHLEAVYN (183 aa)) folds into the Tyr recombinase domain. Catalysis depends on residues Arg-159, Lys-182, His-250, Arg-253, and His-276. Tyr-285 (O-(3'-phospho-DNA)-tyrosine intermediate) is an active-site residue.

Belongs to the 'phage' integrase family. XerC subfamily. In terms of assembly, forms a cyclic heterotetrameric complex composed of two molecules of XerC and two molecules of XerD.

The protein localises to the cytoplasm. Functionally, site-specific tyrosine recombinase, which acts by catalyzing the cutting and rejoining of the recombining DNA molecules. The XerC-XerD complex is essential to convert dimers of the bacterial chromosome into monomers to permit their segregation at cell division. It also contributes to the segregational stability of plasmids. In Rickettsia typhi (strain ATCC VR-144 / Wilmington), this protein is Tyrosine recombinase XerC.